Consider the following 466-residue polypeptide: MDQSSRYVNLALKEEDLIAGGEHVLCAYIMKPKAGYGYVATAAHFAAESSTGTNVEVCTTDDFTRGVDALVYEVDEARELTKIAYPVALFHRNITDGKAMIASFLTLTMGNNQGMGDVEYAKMHDFYVPEAYRALFDGPSVNISALWKVLGRPEVDGGLVVGTIIKPKLGLRPKPFAEACHAFWLGGDFIKNDEPQGNQPFAPLRDTIALVADAMRRAQDETGEAKLFSANITADDPFEIIARGEYVLETFGENASHVALLVDGYVAGAAAITTARRRFPDNFLHYHRAGHGAVTSPQSKRGYTAFVHCKMARLQGASGIHTGTMGFGKMEGESSDRAIAYMLTQDEAQGPFYRQSWGGMKACTPIISGGMNALRMPGFFENLGNANVILTAGGGAFGHIDGPVAGARSLRQAWQAWRDGVPVLDYAREHKELARAFESFPGDADQIYPGWRKALGVEDTRSALPA.

Asn-111 contributes to the substrate binding site. The active-site Proton acceptor is the Lys-166. Substrate is bound at residue Lys-168. Residues Lys-191, Asp-193, and Glu-194 each contribute to the Mg(2+) site. Lys-191 is subject to N6-carboxylysine. The active-site Proton acceptor is His-287. Substrate-binding residues include Arg-288, His-321, and Ser-368.

This sequence belongs to the RuBisCO large chain family. Type II subfamily. As to quaternary structure, homodimer. Requires Mg(2+) as cofactor.

It carries out the reaction 2 (2R)-3-phosphoglycerate + 2 H(+) = D-ribulose 1,5-bisphosphate + CO2 + H2O. It catalyses the reaction D-ribulose 1,5-bisphosphate + O2 = 2-phosphoglycolate + (2R)-3-phosphoglycerate + 2 H(+). In terms of biological role, ruBisCO catalyzes two reactions: the carboxylation of D-ribulose 1,5-bisphosphate, the primary event in carbon dioxide fixation, as well as the oxidative fragmentation of the pentose substrate. Both reactions occur simultaneously and in competition at the same active site. The polypeptide is Ribulose bisphosphate carboxylase (cbbM) (Rhodospirillum rubrum).